We begin with the raw amino-acid sequence, 421 residues long: D-amino acid dehydrogenase (421 aa).

3 to 17 (VIVLGSGVIGVASAY) provides a ligand contact to FAD.

This sequence belongs to the DadA oxidoreductase family. FAD serves as cofactor.

The enzyme catalyses a D-alpha-amino acid + A + H2O = a 2-oxocarboxylate + AH2 + NH4(+). Its pathway is amino-acid degradation; D-alanine degradation; NH(3) and pyruvate from D-alanine: step 1/1. Oxidative deamination of D-amino acids. The sequence is that of D-amino acid dehydrogenase from Acinetobacter baumannii (strain ATCC 17978 / DSM 105126 / CIP 53.77 / LMG 1025 / NCDC KC755 / 5377).